The following is a 238-amino-acid chain: MSELKYKRVLLKLSGEALAGENKFGIDPATVSKICHEIADVVDMGLQVALVIGGGNIFRGLSSSAKGMDRSSADYMGMLATVLNALAVQDALEKLGHPTRVLSAITMQEVCEPYIRRRAERHLEKGRVVICAAGTGNPYFTTDTAAALRGMELKCEAIIKATKVDGVYDKDPMKHDDAVLFPRLTYVETLQRKLGVMDSTAITLAMENEVPIIVCNMFKGSIKRVVCGEEVGTIVQGG.

12-15 (KLSG) serves as a coordination point for ATP. G54 is a UMP binding site. ATP contacts are provided by G55 and R59. UMP-binding positions include D74 and 135-142 (TGNPYFTT). Residues T162, Y168, and D171 each contribute to the ATP site.

It belongs to the UMP kinase family. In terms of assembly, homohexamer.

The protein localises to the cytoplasm. It carries out the reaction UMP + ATP = UDP + ADP. It functions in the pathway pyrimidine metabolism; CTP biosynthesis via de novo pathway; UDP from UMP (UMPK route): step 1/1. With respect to regulation, inhibited by UTP. Functionally, catalyzes the reversible phosphorylation of UMP to UDP. The chain is Uridylate kinase from Nitratidesulfovibrio vulgaris (strain ATCC 29579 / DSM 644 / CCUG 34227 / NCIMB 8303 / VKM B-1760 / Hildenborough) (Desulfovibrio vulgaris).